A 316-amino-acid polypeptide reads, in one-letter code: Transaldolase A (316 aa).

The active-site Schiff-base intermediate with substrate is Lys-131.

It belongs to the transaldolase family. Type 1 subfamily. Homodimer.

It is found in the cytoplasm. It carries out the reaction D-sedoheptulose 7-phosphate + D-glyceraldehyde 3-phosphate = D-erythrose 4-phosphate + beta-D-fructose 6-phosphate. Its pathway is carbohydrate degradation; pentose phosphate pathway; D-glyceraldehyde 3-phosphate and beta-D-fructose 6-phosphate from D-ribose 5-phosphate and D-xylulose 5-phosphate (non-oxidative stage): step 2/3. Transaldolase is important for the balance of metabolites in the pentose-phosphate pathway. The sequence is that of Transaldolase A (talA) from Escherichia coli O157:H7.